Consider the following 268-residue polypeptide: NADH-quinone oxidoreductase subunit B 1 (268 aa).

Residues Cys-42, Cys-43, Cys-108, and Cys-138 each contribute to the [4Fe-4S] cluster site.

It belongs to the complex I 20 kDa subunit family. NDH-1 is composed of 14 different subunits. Subunits NuoB, C, D, E, F, and G constitute the peripheral sector of the complex. [4Fe-4S] cluster is required as a cofactor.

The protein resides in the cell membrane. It catalyses the reaction a quinone + NADH + 5 H(+)(in) = a quinol + NAD(+) + 4 H(+)(out). Its function is as follows. NDH-1 shuttles electrons from NADH, via FMN and iron-sulfur (Fe-S) centers, to quinones in the respiratory chain. The immediate electron acceptor for the enzyme in this species is believed to be ubiquinone. Couples the redox reaction to proton translocation (for every two electrons transferred, four hydrogen ions are translocated across the cytoplasmic membrane), and thus conserves the redox energy in a proton gradient. This Roseiflexus sp. (strain RS-1) protein is NADH-quinone oxidoreductase subunit B 1.